The sequence spans 341 residues: Anthranilate phosphoribosyltransferase (341 aa).

5-phospho-alpha-D-ribose 1-diphosphate contacts are provided by residues Gly79, 82–83, Thr87, 89–92, 107–115, and Ser119; these read GD, NIST, and KHGNRAVSS. Residue Gly79 coordinates anthranilate. Ser91 lines the Mg(2+) pocket. Asn110 is a binding site for anthranilate. Residue Arg165 participates in anthranilate binding. 2 residues coordinate Mg(2+): Asp224 and Glu225.

Belongs to the anthranilate phosphoribosyltransferase family. In terms of assembly, homodimer. It depends on Mg(2+) as a cofactor.

It carries out the reaction N-(5-phospho-beta-D-ribosyl)anthranilate + diphosphate = 5-phospho-alpha-D-ribose 1-diphosphate + anthranilate. The protein operates within amino-acid biosynthesis; L-tryptophan biosynthesis; L-tryptophan from chorismate: step 2/5. In terms of biological role, catalyzes the transfer of the phosphoribosyl group of 5-phosphorylribose-1-pyrophosphate (PRPP) to anthranilate to yield N-(5'-phosphoribosyl)-anthranilate (PRA). The protein is Anthranilate phosphoribosyltransferase of Bacillus thuringiensis subsp. konkukian (strain 97-27).